Consider the following 92-residue polypeptide: Protein S100-B (92 aa).

Ser-2 carries the N-acetylserine modification. EF-hand domains are found at residues 13-48 (DVFH…LEEI) and 49-84 (KEQE…VTTA). A Zn(2+)-binding site is contributed by His-16. Positions 19 and 22 each coordinate Ca(2+). His-26 contributes to the Zn(2+) binding site. Residues Lys-27, Glu-32, Asp-62, Asp-64, Asp-66, Glu-68, and Glu-73 each coordinate Ca(2+). The Zn(2+) site is built by His-86 and His-91.

Belongs to the S-100 family. In terms of assembly, dimer of either two alpha chains, or two beta chains, or one alpha and one beta chain. The S100B dimer binds two molecules of STK38. Interacts with CACYBP in a calcium-dependent manner. Interacts with ATAD3A; this interaction probably occurs in the cytosol prior to ATAD3A mitochondrial targeting. Interacts with S100A6. The S100B dimer interacts with two molecules of CAPZA1. Interacts with AGER. Interacts with PPP5C (via TPR repeats); the interaction is calcium-dependent and modulates PPP5C activity. Interacts with TPPP; this interaction inhibits TPPP dimerization. Interacts with isoform CLSTN3beta of CLSTN3; interaction promotes secretion. In terms of tissue distribution, although predominant among the water-soluble brain proteins, S100 is also found in a variety of other tissues.

It is found in the cytoplasm. The protein resides in the nucleus. It localises to the secreted. Its function is as follows. Small zinc- and- and calcium-binding protein that is highly expressed in astrocytes and constitutes one of the most abundant soluble proteins in brain. Weakly binds calcium but binds zinc very tightly-distinct binding sites with different affinities exist for both ions on each monomer. Physiological concentrations of potassium ion antagonize the binding of both divalent cations, especially affecting high-affinity calcium-binding sites. Acts as a neurotrophic factor that promotes astrocytosis and axonal proliferation. Involved in innervation of thermogenic adipose tissue by acting as an adipocyte-derived neurotrophic factor that promotes sympathetic innervation of adipose tissue. Binds to and initiates the activation of STK38 by releasing autoinhibitory intramolecular interactions within the kinase. Interaction with AGER after myocardial infarction may play a role in myocyte apoptosis by activating ERK1/2 and p53/TP53 signaling. Could assist ATAD3A cytoplasmic processing, preventing aggregation and favoring mitochondrial localization. May mediate calcium-dependent regulation on many physiological processes by interacting with other proteins, such as TPR-containing proteins, and modulating their activity. The sequence is that of Protein S100-B from Rattus norvegicus (Rat).